Here is a 203-residue protein sequence, read N- to C-terminus: Probable nicotinate-nucleotide adenylyltransferase (203 aa).

The protein belongs to the NadD family.

It carries out the reaction nicotinate beta-D-ribonucleotide + ATP + H(+) = deamido-NAD(+) + diphosphate. Its pathway is cofactor biosynthesis; NAD(+) biosynthesis; deamido-NAD(+) from nicotinate D-ribonucleotide: step 1/1. Its function is as follows. Catalyzes the reversible adenylation of nicotinate mononucleotide (NaMN) to nicotinic acid adenine dinucleotide (NaAD). This Dictyoglomus turgidum (strain DSM 6724 / Z-1310) protein is Probable nicotinate-nucleotide adenylyltransferase.